Here is a 147-residue protein sequence, read N- to C-terminus: MVALIQRVKESWVKIDGTEIAKIGKGYNILLGVMKEDTTKDIEKLIKKIVKLRLFPNESGKMDKNILEVKGSVLVVSQFTLAGNAKKGNRPDFTAAMPPKEAKELYDHFCQKLSLHLPVQTGLFGAMMEVGIINDGPVTLILDSKKL.

The Gly-cisPro motif, important for rejection of L-amino acids motif lies at 136–137; the sequence is GP.

Belongs to the DTD family. In terms of assembly, homodimer.

The protein localises to the cytoplasm. It catalyses the reaction glycyl-tRNA(Ala) + H2O = tRNA(Ala) + glycine + H(+). The enzyme catalyses a D-aminoacyl-tRNA + H2O = a tRNA + a D-alpha-amino acid + H(+). Its function is as follows. An aminoacyl-tRNA editing enzyme that deacylates mischarged D-aminoacyl-tRNAs. Also deacylates mischarged glycyl-tRNA(Ala), protecting cells against glycine mischarging by AlaRS. Acts via tRNA-based rather than protein-based catalysis; rejects L-amino acids rather than detecting D-amino acids in the active site. By recycling D-aminoacyl-tRNA to D-amino acids and free tRNA molecules, this enzyme counteracts the toxicity associated with the formation of D-aminoacyl-tRNA entities in vivo and helps enforce protein L-homochirality. This chain is D-aminoacyl-tRNA deacylase, found in Nitratiruptor sp. (strain SB155-2).